The chain runs to 93 residues: DNA-directed RNA polymerase subunit omega (93 aa).

Belongs to the RNA polymerase subunit omega family. As to quaternary structure, the RNAP catalytic core consists of 2 alpha, 1 beta, 1 beta' and 1 omega subunit. When a sigma factor is associated with the core the holoenzyme is formed, which can initiate transcription.

It carries out the reaction RNA(n) + a ribonucleoside 5'-triphosphate = RNA(n+1) + diphosphate. Its function is as follows. Promotes RNA polymerase assembly. Latches the N- and C-terminal regions of the beta' subunit thereby facilitating its interaction with the beta and alpha subunits. This is DNA-directed RNA polymerase subunit omega from Glaesserella parasuis serovar 5 (strain SH0165) (Haemophilus parasuis).